The primary structure comprises 430 residues: tRNA-2-methylthio-N(6)-dimethylallyladenosine synthase (430 aa).

The MTTase N-terminal domain occupies 1 to 110; sequence MKVHIFTYGC…VPDAVLNAKN (110 aa). [4Fe-4S] cluster-binding residues include C10, C46, C75, C146, C150, and C153. Residues 132–363 enclose the Radical SAM core domain; it reads RSSNHHAWVT…LNLQKTINKE (232 aa). One can recognise a TRAM domain in the interval 366 to 427; it reads KSYLGKEVEV…AGPLYGEIKK (62 aa).

This sequence belongs to the methylthiotransferase family. MiaB subfamily. Monomer. It depends on [4Fe-4S] cluster as a cofactor.

The protein localises to the cytoplasm. The catalysed reaction is N(6)-dimethylallyladenosine(37) in tRNA + (sulfur carrier)-SH + AH2 + 2 S-adenosyl-L-methionine = 2-methylsulfanyl-N(6)-dimethylallyladenosine(37) in tRNA + (sulfur carrier)-H + 5'-deoxyadenosine + L-methionine + A + S-adenosyl-L-homocysteine + 2 H(+). Its function is as follows. Catalyzes the methylthiolation of N6-(dimethylallyl)adenosine (i(6)A), leading to the formation of 2-methylthio-N6-(dimethylallyl)adenosine (ms(2)i(6)A) at position 37 in tRNAs that read codons beginning with uridine. This chain is tRNA-2-methylthio-N(6)-dimethylallyladenosine synthase, found in Fervidobacterium nodosum (strain ATCC 35602 / DSM 5306 / Rt17-B1).